A 149-amino-acid chain; its full sequence is Deoxyuridine 5'-triphosphate nucleotidohydrolase (149 aa).

Residues 68–70 (RSG), Asn-81, 85–87 (LID), and Met-95 contribute to the substrate site.

It belongs to the dUTPase family. Requires Mg(2+) as cofactor.

The enzyme catalyses dUTP + H2O = dUMP + diphosphate + H(+). The protein operates within pyrimidine metabolism; dUMP biosynthesis; dUMP from dCTP (dUTP route): step 2/2. Functionally, this enzyme is involved in nucleotide metabolism: it produces dUMP, the immediate precursor of thymidine nucleotides and it decreases the intracellular concentration of dUTP so that uracil cannot be incorporated into DNA. The sequence is that of Deoxyuridine 5'-triphosphate nucleotidohydrolase from Janthinobacterium sp. (strain Marseille) (Minibacterium massiliensis).